Reading from the N-terminus, the 44-residue chain is uncharacterized protein (44 aa).

The N-terminal stretch at methionine 1–alanine 28 is a signal peptide.

This is an uncharacterized protein from Bacillus subtilis (strain 168).